Reading from the N-terminus, the 243-residue chain is MPSGMFSIDNILAARPRCKESVLLPQNGPVVFSSLGESLYGPADYSGFYNRAVAPTSTLQGVNGSRLGFNNYYYGQLHVQTHLGPSCCGTVQALGTQQCSCVPPATAYDGAGSVLMPPVPHQMLPYMNVGTLSRTELQLLNQLHCRRKRRHRTIFTDEQLEALENLFQETKYPDVGTREQLARRVHLREEKVEVWFKNRRAKWRRQKRSSSEESENAQKWNKSSKNSAEKADEQVKSDLDSDS.

Residues 148 to 207 constitute a DNA-binding region (homeobox); the sequence is KRRHRTIFTDEQLEALENLFQETKYPDVGTREQLARRVHLREEKVEVWFKNRRAKWRRQK. A disordered region spans residues 201 to 243; sequence AKWRRQKRSSSEESENAQKWNKSSKNSAEKADEQVKSDLDSDS. The segment covering 217-226 has biased composition (polar residues); that stretch reads AQKWNKSSKN. Residues 227–243 show a composition bias toward basic and acidic residues; sequence SAEKADEQVKSDLDSDS.

It belongs to the paired homeobox family. Bicoid subfamily. At the start of gastrulation, it is found in a patch of cells encompassing 60 degrees of arc on the dorsal marginal zone.

It is found in the nucleus. Functionally, plays a central role in executing Spemann's organizer phenomenon (the dorsal blastopore lip of the early Xenopus laevis gastrula can organize a complete secondary body axis when transplanted to another embryo). The protein is Homeobox protein goosecoid isoform A (gsc-a) of Xenopus laevis (African clawed frog).